The sequence spans 398 residues: Putative F-box protein At1g67450 (398 aa).

In terms of domain architecture, F-box spans 2-56 (TMMMSDLPNDLVEEILSRVPITSLGAVRSTCKRWNGLSKDRIVCKGDANQQFTGF).

This Arabidopsis thaliana (Mouse-ear cress) protein is Putative F-box protein At1g67450.